Reading from the N-terminus, the 835-residue chain is Disease resistance protein RPP13 (835 aa).

A coiled-coil region spans residues 25–41 (MAVKEDLEELKTELTCI). The region spanning 144–453 (SSLRVRQLRR…AEGFIQGDEE (310 aa)) is the NB-ARC domain. 192–199 (GMGGLGKT) contacts ATP.

The protein belongs to the disease resistance NB-LRR family. RPP13 subfamily.

Disease resistance protein. Resistance proteins guard the plant against pathogens that contain an appropriate avirulence protein via an indirect interaction with this avirulence protein. That triggers a defense system including the hypersensitive response, which restricts the pathogen growth. In contrast to other resistance proteins, it works independently of ESD1 and NSD1 proteins and does not require the accumulation of salicylic acid, suggesting the existence of an independent signaling pathway. The specificity to avirulence proteins differs in the different cultivars. The protein is Disease resistance protein RPP13 (RPP13) of Arabidopsis thaliana (Mouse-ear cress).